We begin with the raw amino-acid sequence, 157 residues long: Thioredoxin 2 (157 aa).

Residues 1 to 22 (MKHILALVVFIISFFCFKDVNC) form the signal peptide. The 112-residue stretch at 46–157 (LRMYNKMPRL…ELTSTIRKHL (112 aa)) folds into the Thioredoxin domain. Residues cysteine 82 and cysteine 85 each act as nucleophile in the active site. The cysteines at positions 82 and 85 are disulfide-linked.

Belongs to the thioredoxin family. As to quaternary structure, monomer. Component of the translocon PTEX complex composed of HSP101, EXP2, PTEX150, PTEX88 and TRX2. Post-translationally, the disulfide bond between Cys-82 and Cys-85 acts as a redox-active center and is reduced by thioredoxin reductase TRXR.

Participates in various redox reactions through the reversible oxidation of its active center dithiol to a disulfide and catalyzes dithiol-disulfide exchange reactions. As part of the translocon PTEX complex, plays a role in the export of parasite proteins into the host erythrocyte. The translocon PTEX complex is a multi-protein machinery resident in the parasite parasitophorous vacuolar membrane, responsible for protein secretion into host cells. May contribute to the unfolding of proteins containing the PEXEL localization motif before their passage through the translocon or regulate the PTEX complex function. The polypeptide is Thioredoxin 2 (Plasmodium berghei (strain Anka)).